The sequence spans 99 residues: Acylphosphatase (99 aa).

Residues 10–99 (RLTAFVHGHV…PRGVEGFTER (90 aa)) form the Acylphosphatase-like domain. Active-site residues include arginine 25 and asparagine 43.

The protein belongs to the acylphosphatase family.

The catalysed reaction is an acyl phosphate + H2O = a carboxylate + phosphate + H(+). This chain is Acylphosphatase (acyP), found in Corynebacterium efficiens (strain DSM 44549 / YS-314 / AJ 12310 / JCM 11189 / NBRC 100395).